The following is a 311-amino-acid chain: Long form salivary protein D7L1 (311 aa).

The first 21 residues, methionine 1–alanine 21, serve as a signal peptide directing secretion. Disulfide bonds link cysteine 37/cysteine 73, cysteine 69/cysteine 128, cysteine 178/cysteine 211, and cysteine 252/cysteine 263.

It belongs to the PBP/GOBP family.

It is found in the secreted. In terms of biological role, modulates blood feeding of female mosquitoes on vertebrate species by binding and sequestering different mediators involved in the host response. Binds leukotriene C4 and U-46619, a stable analog of thromboxane A2. Inhibits agonist-induced platelet aggregation. Exhibits vasodilating activity. The chain is Long form salivary protein D7L1 from Anopheles gambiae (African malaria mosquito).